The primary structure comprises 396 residues: 1-deoxy-D-xylulose 5-phosphate reductoisomerase (396 aa).

The NADPH site is built by Thr-13, Gly-14, Ser-15, Ile-16, and Asn-127. Residue Lys-128 coordinates 1-deoxy-D-xylulose 5-phosphate. Glu-129 contributes to the NADPH binding site. Residue Asp-153 coordinates Mn(2+). Positions 154, 155, 184, and 207 each coordinate 1-deoxy-D-xylulose 5-phosphate. Glu-155 is a binding site for Mn(2+). Gly-213 is an NADPH binding site. Residues Ser-220, Asn-225, Lys-226, and Glu-229 each contribute to the 1-deoxy-D-xylulose 5-phosphate site. Glu-229 lines the Mn(2+) pocket.

The protein belongs to the DXR family. It depends on Mg(2+) as a cofactor. Mn(2+) serves as cofactor.

It catalyses the reaction 2-C-methyl-D-erythritol 4-phosphate + NADP(+) = 1-deoxy-D-xylulose 5-phosphate + NADPH + H(+). It functions in the pathway isoprenoid biosynthesis; isopentenyl diphosphate biosynthesis via DXP pathway; isopentenyl diphosphate from 1-deoxy-D-xylulose 5-phosphate: step 1/6. Its function is as follows. Catalyzes the NADPH-dependent rearrangement and reduction of 1-deoxy-D-xylulose-5-phosphate (DXP) to 2-C-methyl-D-erythritol 4-phosphate (MEP). In Pseudomonas putida (strain W619), this protein is 1-deoxy-D-xylulose 5-phosphate reductoisomerase.